Reading from the N-terminus, the 231-residue chain is 2-C-methyl-D-erythritol 4-phosphate cytidylyltransferase (231 aa).

The protein belongs to the IspD/TarI cytidylyltransferase family. IspD subfamily.

The catalysed reaction is 2-C-methyl-D-erythritol 4-phosphate + CTP + H(+) = 4-CDP-2-C-methyl-D-erythritol + diphosphate. Its pathway is isoprenoid biosynthesis; isopentenyl diphosphate biosynthesis via DXP pathway; isopentenyl diphosphate from 1-deoxy-D-xylulose 5-phosphate: step 2/6. Its function is as follows. Catalyzes the formation of 4-diphosphocytidyl-2-C-methyl-D-erythritol from CTP and 2-C-methyl-D-erythritol 4-phosphate (MEP). In Mycobacterium bovis (strain BCG / Pasteur 1173P2), this protein is 2-C-methyl-D-erythritol 4-phosphate cytidylyltransferase.